A 371-amino-acid polypeptide reads, in one-letter code: Queuine tRNA-ribosyltransferase (371 aa).

Aspartate 90 serves as the catalytic Proton acceptor. Substrate contacts are provided by residues 90-94 (DSGGF), aspartate 144, glutamine 189, and glycine 215. The interval 246–252 (GVGTPEN) is RNA binding. Aspartate 265 serves as the catalytic Nucleophile. Residues 270–274 (TRNAR) form an RNA binding; important for wobble base 34 recognition region. 4 residues coordinate Zn(2+): cysteine 303, cysteine 305, cysteine 308, and histidine 334.

Belongs to the queuine tRNA-ribosyltransferase family. In terms of assembly, homodimer. Within each dimer, one monomer is responsible for RNA recognition and catalysis, while the other monomer binds to the replacement base PreQ1. It depends on Zn(2+) as a cofactor.

The catalysed reaction is 7-aminomethyl-7-carbaguanine + guanosine(34) in tRNA = 7-aminomethyl-7-carbaguanosine(34) in tRNA + guanine. It participates in tRNA modification; tRNA-queuosine biosynthesis. Catalyzes the base-exchange of a guanine (G) residue with the queuine precursor 7-aminomethyl-7-deazaguanine (PreQ1) at position 34 (anticodon wobble position) in tRNAs with GU(N) anticodons (tRNA-Asp, -Asn, -His and -Tyr). Catalysis occurs through a double-displacement mechanism. The nucleophile active site attacks the C1' of nucleotide 34 to detach the guanine base from the RNA, forming a covalent enzyme-RNA intermediate. The proton acceptor active site deprotonates the incoming PreQ1, allowing a nucleophilic attack on the C1' of the ribose to form the product. After dissociation, two additional enzymatic reactions on the tRNA convert PreQ1 to queuine (Q), resulting in the hypermodified nucleoside queuosine (7-(((4,5-cis-dihydroxy-2-cyclopenten-1-yl)amino)methyl)-7-deazaguanosine). In Helicobacter acinonychis (strain Sheeba), this protein is Queuine tRNA-ribosyltransferase.